We begin with the raw amino-acid sequence, 260 residues long: Thiamine thiazole synthase (260 aa).

NAD(+)-binding positions include Ala36, 55 to 56, Gly63, and 154 to 156; these read EQ and HVD. Fe cation-binding residues include Asp156 and His171. Residue Met224 participates in NAD(+) binding. A glycine-binding site is contributed by Arg234.

The protein belongs to the THI4 family. In terms of assembly, homooctamer; tetramer of dimers. Requires Fe(2+) as cofactor.

The enzyme catalyses hydrogen sulfide + glycine + NAD(+) = ADP-5-ethyl-4-methylthiazole-2-carboxylate + nicotinamide + 3 H2O + H(+). It functions in the pathway cofactor biosynthesis; thiamine diphosphate biosynthesis. In terms of biological role, involved in the biosynthesis of the thiazole moiety of thiamine. Catalyzes the conversion of NAD and glycine to adenosine diphosphate 5-(2-hydroxyethyl)-4-methylthiazole-2-carboxylate (ADT), an adenylated thiazole intermediate, using free sulfide as a source of sulfur. This chain is Thiamine thiazole synthase, found in Methanosarcina barkeri (strain Fusaro / DSM 804).